We begin with the raw amino-acid sequence, 277 residues long: Alpha carbonic anhydrase 5 (277 aa).

Residues 1 to 22 (MKIPSIGYVFFLIFISITIVSS) form the signal peptide. Residues 33–269 (TQFNYEKKGE…KNERPVALYI (237 aa)) enclose the Alpha-carbonic anhydrase domain. Cys58 and Cys219 are disulfide-bonded. The N-linked (GlcNAc...) asparagine glycan is linked to Asn91. The active-site Proton acceptor is the His99. An N-linked (GlcNAc...) asparagine glycan is attached at Asn117. Zn(2+)-binding residues include His127, His129, and His146. Position 215–216 (215–216 (TT)) interacts with substrate.

Belongs to the alpha-class carbonic anhydrase family. It depends on Zn(2+) as a cofactor. In terms of processing, N-glycosylated.

It localises to the plastid. Its subcellular location is the chloroplast stroma. It catalyses the reaction hydrogencarbonate + H(+) = CO2 + H2O. In terms of biological role, reversible hydration of carbon dioxide. The polypeptide is Alpha carbonic anhydrase 5 (ACA5) (Arabidopsis thaliana (Mouse-ear cress)).